The primary structure comprises 465 residues: uncharacterized protein (465 aa).

The span at Lys-87–Gln-112 shows a compositional bias: polar residues. Disordered regions lie at residues Lys-87–Asp-169 and Glu-201–Phe-244. The segment covering Asn-113–Asn-139 has biased composition (low complexity). The segment covering Gly-141 to Ser-157 has biased composition (acidic residues). Residues Asn-217–Phe-244 show a composition bias toward low complexity.

This is an uncharacterized protein from Dictyostelium discoideum (Social amoeba).